The primary structure comprises 171 residues: Endoribonuclease YbeY (171 aa).

Zn(2+)-binding residues include histidine 115, histidine 119, and histidine 125.

The protein belongs to the endoribonuclease YbeY family. It depends on Zn(2+) as a cofactor.

The protein resides in the cytoplasm. Functionally, single strand-specific metallo-endoribonuclease involved in late-stage 70S ribosome quality control and in maturation of the 3' terminus of the 16S rRNA. This chain is Endoribonuclease YbeY, found in Tropheryma whipplei (strain TW08/27) (Whipple's bacillus).